Reading from the N-terminus, the 221-residue chain is Urease accessory protein UreF (221 aa).

This sequence belongs to the UreF family. As to quaternary structure, ureD, UreF and UreG form a complex that acts as a GTP-hydrolysis-dependent molecular chaperone, activating the urease apoprotein by helping to assemble the nickel containing metallocenter of UreC. The UreE protein probably delivers the nickel.

The protein resides in the cytoplasm. Functionally, required for maturation of urease via the functional incorporation of the urease nickel metallocenter. This Teredinibacter turnerae (strain ATCC 39867 / T7901) protein is Urease accessory protein UreF.